We begin with the raw amino-acid sequence, 727 residues long: Translation initiation factor IF-2, mitochondrial (727 aa).

Residues 1–29 (MNQKLLKLENLLRFHTICRQVHSPSQRRL) constitute a mitochondrion transit peptide. In terms of domain architecture, tr-type G spans 178 to 346 (PRSPVVTVMG…ATIALAEILE (169 aa)). The interval 187–194 (GHVDHGKT) is G1. A GTP-binding site is contributed by 187 to 194 (GHVDHGKT). Residues 212–216 (GITQH) form a G2 region. Residues 234 to 237 (DTPG) and 288 to 291 (NKCD) contribute to the GTP site. The interval 234 to 237 (DTPG) is G3. Positions 288–291 (NKCD) are G4. The interval 324 to 326 (SAL) is G5. The residue at position 688 (T688) is a Phosphothreonine.

It belongs to the TRAFAC class translation factor GTPase superfamily. Classic translation factor GTPase family. IF-2 subfamily. Monomer.

It is found in the mitochondrion. In terms of biological role, one of the essential components for the initiation of protein synthesis. Protects formylmethionyl-tRNA from spontaneous hydrolysis and promotes its binding to the 30S ribosomal subunits. Also involved in the hydrolysis of GTP during the formation of the 70S ribosomal complex. In Mus musculus (Mouse), this protein is Translation initiation factor IF-2, mitochondrial (Mtif2).